We begin with the raw amino-acid sequence, 271 residues long: 4-hydroxy-tetrahydrodipicolinate reductase (271 aa).

Residues 10–15, Glu-36, 100–102, and 124–127 contribute to the NAD(+) site; these read GAGGRM, GTT, and SGNM. Catalysis depends on His-157, which acts as the Proton donor/acceptor. A (S)-2,3,4,5-tetrahydrodipicolinate-binding site is contributed by His-158. Residue Lys-161 is the Proton donor of the active site. A (S)-2,3,4,5-tetrahydrodipicolinate-binding site is contributed by 167 to 168; that stretch reads GT.

It belongs to the DapB family.

It localises to the cytoplasm. It catalyses the reaction (S)-2,3,4,5-tetrahydrodipicolinate + NAD(+) + H2O = (2S,4S)-4-hydroxy-2,3,4,5-tetrahydrodipicolinate + NADH + H(+). It carries out the reaction (S)-2,3,4,5-tetrahydrodipicolinate + NADP(+) + H2O = (2S,4S)-4-hydroxy-2,3,4,5-tetrahydrodipicolinate + NADPH + H(+). It functions in the pathway amino-acid biosynthesis; L-lysine biosynthesis via DAP pathway; (S)-tetrahydrodipicolinate from L-aspartate: step 4/4. Functionally, catalyzes the conversion of 4-hydroxy-tetrahydrodipicolinate (HTPA) to tetrahydrodipicolinate. This is 4-hydroxy-tetrahydrodipicolinate reductase from Rhodopseudomonas palustris (strain BisB5).